The following is a 348-amino-acid chain: D-erythrose-4-phosphate dehydrogenase (348 aa).

NAD(+) is bound by residues 12–13 (RI) and arginine 81. Substrate-binding positions include 154–156 (SCT), arginine 200, 213–214 (TK), and arginine 236. Cysteine 155 acts as the Nucleophile in catalysis. Asparagine 318 contributes to the NAD(+) binding site.

Belongs to the glyceraldehyde-3-phosphate dehydrogenase family. Epd subfamily. As to quaternary structure, homotetramer.

It is found in the cytoplasm. It catalyses the reaction D-erythrose 4-phosphate + NAD(+) + H2O = 4-phospho-D-erythronate + NADH + 2 H(+). It participates in cofactor biosynthesis; pyridoxine 5'-phosphate biosynthesis; pyridoxine 5'-phosphate from D-erythrose 4-phosphate: step 1/5. Functionally, catalyzes the NAD-dependent conversion of D-erythrose 4-phosphate to 4-phosphoerythronate. In Salmonella schwarzengrund (strain CVM19633), this protein is D-erythrose-4-phosphate dehydrogenase.